A 73-amino-acid polypeptide reads, in one-letter code: UPF0154 protein MG335.1 (73 aa).

A helical transmembrane segment spans residues 6–26; sequence LALGLGIPLSLLVGMILGYFI.

Belongs to the UPF0154 family.

The protein localises to the membrane. The sequence is that of UPF0154 protein MG335.1 from Mycoplasma genitalium (strain ATCC 33530 / DSM 19775 / NCTC 10195 / G37) (Mycoplasmoides genitalium).